The chain runs to 540 residues: Cytochrome P450 monooxygenase ptmG (540 aa).

A glycan (N-linked (GlcNAc...) asparagine) is linked at Asn-17. 2 helical membrane-spanning segments follow: residues 20-40 and 325-345; these read VMTL…YICI and AAFL…FLLL. Cys-474 is a binding site for heme.

The protein belongs to the cytochrome P450 family. Requires heme as cofactor.

It is found in the membrane. It functions in the pathway secondary metabolite biosynthesis. In terms of biological role, cytochrome P450 monooxygenase; part of the gene cluster that mediates the biosynthesis of the indole diterpenes penitrems. The geranylgeranyl diphosphate (GGPP) synthase ptmG catalyzes the first step in penitrem biosynthesis via conversion of farnesyl pyrophosphate and isopentyl pyrophosphate into geranylgeranyl pyrophosphate (GGPP). Condensation of indole-3-glycerol phosphate with GGPP by the prenyl transferase ptmC then forms 3-geranylgeranylindole (3-GGI). Epoxidation by the FAD-dependent monooxygenase ptmM leads to a epoxidized-GGI that is substrate of the terpene cyclase ptmB for cyclization to yield paspaline. Paspaline is subsequently converted to 13-desoxypaxilline by the cytochrome P450 monooxygenase ptmP, the latter being then converted to paxilline by the cytochrome P450 monooxygenase ptmQ. Paxilline is converted to beta-paxitriol via C-10 ketoreduction by the short-chain dehydrogenase ptmH which can be monoprenylated at the C-20 by the indole diterpene prenyltransferase ptmD. A two-step elimination (acetylation and elimination) process performed by the O-acetyltransferase ptmV and ptmI leads to the production of the prenylated form of penijanthine. The FAD-linked oxidoreductase ptmO then converts the prenylated form of penijanthine into PC-M5 which is in turn transformed into PC-M4 by the aromatic dimethylallyltransferase ptmE. Five sequential oxidative transformations performed by the cytochrome P450 monooxygenases ptmK, ptmU, ptmL, ptmN and ptmJ yield the various penitrem compounds. PtmK, ptmU and ptmM are involved in the formation of the key bicyclic ring of penitrem C via the formation of the intermediates secopenitrem D and penitrem D. PtmL catalyzes the epoxidation of penitrem D and C to yield penitrem B and F, respectively. PtmJ catalyzes the last benzylic hydroxylation to convert penitrem B to prenitrem E and penitrem F to penitrem A. The polypeptide is Cytochrome P450 monooxygenase ptmG (Penicillium ochrochloron).